Here is a 176-residue protein sequence, read N- to C-terminus: Tubulin polymerization-promoting protein family member 3 (176 aa).

An N-acetylalanine modification is found at A2. Positions 132–152 (TGSHKERFDESGKGKGIAGRQ) are disordered. The span at 134 to 144 (SHKERFDESGK) shows a compositional bias: basic and acidic residues.

The protein belongs to the TPPP family.

Its subcellular location is the cytoplasm. It localises to the cytoskeleton. Its function is as follows. Regulator of microtubule dynamic that has microtubule bundling activity. Required for embryo implantation; possibly by regulating beta-catenin. Also required for decidualization via regulation of beta-catenin. This is Tubulin polymerization-promoting protein family member 3 from Mus musculus (Mouse).